Reading from the N-terminus, the 360-residue chain is MTTTLQQRESASLWEQFCQWITSTNNRLYVGWFGVIMIPTLLTATTCFIIAFIAAPPVDIDGIREPVAGSLLYGNNIISGAVVPSSNAIGLHFYPIWEAASLDEWLYNGGPYQLVIFHFLLGVFCYLGRQWELSFRLGMRPWICVAYSAPVSAATAVFLIYPIGQGSFSDGMPLGISGTFNFMFVFQAEHNILMHPFHMLGVAGVFGGSLFSAMHGSLVTSSLVRETTEIESQNYGYKFGQEEETYNIVAAHGYFGRLIFQYASFNNSRSLHFFLGAWPVIGIWFTAMGVSTMAFNLNGFNFNQSILDSQGRVIGTWVDVLNRAGIGMEVMHERNAHNFPLDLASGEQAPVALTAPAING.

Transmembrane regions (helical) follow at residues 29–46, 118–133, and 142–156; these read YVGW…TATT, HFLL…QWEL, and WICV…AATA. Residue histidine 118 coordinates chlorophyll a. Tyrosine 126 is a pheophytin a binding site. Residues aspartate 170 and glutamate 189 each coordinate [CaMn4O5] cluster. A helical membrane pass occupies residues 197–218; the sequence is FHMLGVAGVFGGSLFSAMHGSL. Histidine 198 contacts chlorophyll a. Residues histidine 215 and 264–265 each bind a quinone; that span reads SF. Histidine 215 provides a ligand contact to Fe cation. Residue histidine 272 coordinates Fe cation. Residues 274-288 form a helical membrane-spanning segment; it reads FLGAWPVIGIWFTAM. The [CaMn4O5] cluster site is built by histidine 332, glutamate 333, aspartate 342, and alanine 344. The propeptide occupies 345–360; it reads SGEQAPVALTAPAING.

This sequence belongs to the reaction center PufL/M/PsbA/D family. In terms of assembly, PSII is composed of 1 copy each of membrane proteins PsbA, PsbB, PsbC, PsbD, PsbE, PsbF, PsbH, PsbI, PsbJ, PsbK, PsbL, PsbM, PsbT, PsbX, PsbY, PsbZ, Psb30/Ycf12, peripheral proteins PsbO, CyanoQ (PsbQ), PsbU, PsbV and a large number of cofactors. It forms dimeric complexes. The D1/D2 heterodimer binds P680, chlorophylls that are the primary electron donor of PSII, and subsequent electron acceptors. It shares a non-heme iron and each subunit binds pheophytin, quinone, additional chlorophylls, carotenoids and lipids. D1 provides most of the ligands for the Mn4-Ca-O5 cluster of the oxygen-evolving complex (OEC). There is also a Cl(-1) ion associated with D1 and D2, which is required for oxygen evolution. The PSII complex binds additional chlorophylls, carotenoids and specific lipids. is required as a cofactor. Post-translationally, tyr-161 forms a radical intermediate that is referred to as redox-active TyrZ, YZ or Y-Z. In terms of processing, C-terminally processed by CtpA; processing is essential to allow assembly of the oxygen-evolving complex and thus photosynthetic growth.

Its subcellular location is the cellular thylakoid membrane. It catalyses the reaction 2 a plastoquinone + 4 hnu + 2 H2O = 2 a plastoquinol + O2. Functionally, photosystem II (PSII) is a light-driven water:plastoquinone oxidoreductase that uses light energy to abstract electrons from H(2)O, generating O(2) and a proton gradient subsequently used for ATP formation. It consists of a core antenna complex that captures photons, and an electron transfer chain that converts photonic excitation into a charge separation. The D1/D2 (PsbA/PsbD) reaction center heterodimer binds P680, the primary electron donor of PSII as well as several subsequent electron acceptors. This chain is Photosystem II protein D1, found in Microcystis aeruginosa.